Reading from the N-terminus, the 1413-residue chain is DNA-directed RNA polymerase subunit beta' (1413 aa).

Residues Cys70, Cys72, Cys85, and Cys88 each contribute to the Zn(2+) site. Mg(2+) is bound by residues Asp460, Asp462, and Asp464. Positions 819, 893, 900, and 903 each coordinate Zn(2+). Positions 1393–1413 (EAFEFGTPETPAAEQTPHTNE) are disordered.

It belongs to the RNA polymerase beta' chain family. In terms of assembly, the RNAP catalytic core consists of 2 alpha, 1 beta, 1 beta' and 1 omega subunit. When a sigma factor is associated with the core the holoenzyme is formed, which can initiate transcription. The cofactor is Mg(2+). It depends on Zn(2+) as a cofactor.

The catalysed reaction is RNA(n) + a ribonucleoside 5'-triphosphate = RNA(n+1) + diphosphate. Functionally, DNA-dependent RNA polymerase catalyzes the transcription of DNA into RNA using the four ribonucleoside triphosphates as substrates. This is DNA-directed RNA polymerase subunit beta' from Paraburkholderia phymatum (strain DSM 17167 / CIP 108236 / LMG 21445 / STM815) (Burkholderia phymatum).